A 352-amino-acid polypeptide reads, in one-letter code: Carbohydrate sulfotransferase 11 (352 aa).

Over Met-1–Arg-16 the chain is Cytoplasmic. Residues Met-17 to Phe-37 traverse the membrane as a helical; Signal-anchor for type II membrane protein segment. Residues Gln-38–Gln-352 lie on the Lumenal side of the membrane. Residues Pro-124–Asn-130 and Arg-186–Ser-194 contribute to the 3'-phosphoadenylyl sulfate site. Residues Asn-205, Asn-223, Asn-321, and Asn-342 are each glycosylated (N-linked (GlcNAc...) asparagine).

This sequence belongs to the sulfotransferase 2 family.

The protein resides in the golgi apparatus membrane. It catalyses the reaction chondroitin beta-D-glucuronate + n 3'-phosphoadenylyl sulfate = chondroitin 4'-sulfate + n adenosine 3',5'-bisphosphate + n H(+). Catalyzes the transfer of sulfate to position 4 of the N-acetylgalactosamine (GalNAc) residue of chondroitin. The chain is Carbohydrate sulfotransferase 11 (chst11) from Danio rerio (Zebrafish).